A 212-amino-acid chain; its full sequence is Regulatory protein RecX (212 aa).

It belongs to the RecX family.

It localises to the cytoplasm. Functionally, modulates RecA activity. The protein is Regulatory protein RecX of Clostridium botulinum (strain Eklund 17B / Type B).